Reading from the N-terminus, the 75-residue chain is CDC42 small effector protein 2-B (75 aa).

S-palmitoyl cysteine attachment occurs at residues Cys-10 and Cys-11. Residues 29–42 (IGEPMNFVHTAHVG) form the CRIB domain.

This sequence belongs to the CDC42SE/SPEC family.

The protein localises to the cytoplasm. Its subcellular location is the cytoskeleton. It localises to the cell membrane. Functionally, probably involved in the organization of the actin cytoskeleton by acting downstream of CDC42, inducing actin filament assembly. The sequence is that of CDC42 small effector protein 2-B (cdc42se2-b) from Xenopus laevis (African clawed frog).